A 361-amino-acid chain; its full sequence is Protein RecA (361 aa).

Residue G77–T84 participates in ATP binding.

This sequence belongs to the RecA family.

It localises to the cytoplasm. In terms of biological role, can catalyze the hydrolysis of ATP in the presence of single-stranded DNA, the ATP-dependent uptake of single-stranded DNA by duplex DNA, and the ATP-dependent hybridization of homologous single-stranded DNAs. It interacts with LexA causing its activation and leading to its autocatalytic cleavage. The chain is Protein RecA from Sinorhizobium medicae (strain WSM419) (Ensifer medicae).